Consider the following 77-residue polypeptide: UPF0291 protein RBAM_017680 (77 aa).

The tract at residues 55–77 is disordered; the sequence is IDPEGNDVTPEKLKREQQKNNLH. The span at 63–77 shows a compositional bias: basic and acidic residues; it reads TPEKLKREQQKNNLH.

The protein belongs to the UPF0291 family.

The protein resides in the cytoplasm. This Bacillus velezensis (strain DSM 23117 / BGSC 10A6 / LMG 26770 / FZB42) (Bacillus amyloliquefaciens subsp. plantarum) protein is UPF0291 protein RBAM_017680.